A 199-amino-acid polypeptide reads, in one-letter code: uncharacterized protein (199 aa).

The protein to M.jannaschii MJ1356.

This is an uncharacterized protein from Methanocaldococcus jannaschii (strain ATCC 43067 / DSM 2661 / JAL-1 / JCM 10045 / NBRC 100440) (Methanococcus jannaschii).